A 321-amino-acid chain; its full sequence is Ubiquinone biosynthesis protein COQ4, mitochondrial (321 aa).

Positions 205, 206, 209, and 221 each coordinate Zn(2+).

It belongs to the COQ4 family. Component of a multi-subunit COQ enzyme complex, composed of at least COQ3, COQ4, COQ5, COQ6, COQ7 and COQ9. Zn(2+) is required as a cofactor.

The protein resides in the mitochondrion inner membrane. The enzyme catalyses a 4-hydroxy-3-methoxy-5-(all-trans-polyprenyl)benzoate + H(+) = a 2-methoxy-6-(all-trans-polyprenyl)phenol + CO2. It participates in cofactor biosynthesis; ubiquinone biosynthesis. Its function is as follows. Lyase that catalyzes the C1-decarboxylation of 4-hydroxy-3-methoxy-5-(all-trans-polyprenyl)benzoic acid into 2-methoxy-6-(all-trans-polyprenyl)phenol during ubiquinone biosynthesis. The polypeptide is Ubiquinone biosynthesis protein COQ4, mitochondrial (Candida tropicalis (strain ATCC MYA-3404 / T1) (Yeast)).